We begin with the raw amino-acid sequence, 81 residues long: Sec-independent protein translocase protein TatA (81 aa).

A helical transmembrane segment spans residues 1–21 (MGMPSGQELLIILAIVVLLFG). The disordered stretch occupies residues 45–81 (NEDDDTEVKSASTEAPKKVESAEEVASKESSKTPTQA). Basic and acidic residues predominate over residues 59 to 75 (APKKVESAEEVASKESS).

This sequence belongs to the TatA/E family. In terms of assembly, the Tat system comprises two distinct complexes: a TatABC complex, containing multiple copies of TatA, TatB and TatC subunits, and a separate TatA complex, containing only TatA subunits. Substrates initially bind to the TatABC complex, which probably triggers association of the separate TatA complex to form the active translocon.

It is found in the cell inner membrane. Its function is as follows. Part of the twin-arginine translocation (Tat) system that transports large folded proteins containing a characteristic twin-arginine motif in their signal peptide across membranes. TatA could form the protein-conducting channel of the Tat system. This is Sec-independent protein translocase protein TatA from Sulfurimonas denitrificans (strain ATCC 33889 / DSM 1251) (Thiomicrospira denitrificans (strain ATCC 33889 / DSM 1251)).